The chain runs to 313 residues: Porphobilinogen deaminase (313 aa).

Residue cysteine 242 is modified to S-(dipyrrolylmethanemethyl)cysteine.

It belongs to the HMBS family. Monomer. Dipyrromethane serves as cofactor.

It carries out the reaction 4 porphobilinogen + H2O = hydroxymethylbilane + 4 NH4(+). Its pathway is porphyrin-containing compound metabolism; protoporphyrin-IX biosynthesis; coproporphyrinogen-III from 5-aminolevulinate: step 2/4. In terms of biological role, tetrapolymerization of the monopyrrole PBG into the hydroxymethylbilane pre-uroporphyrinogen in several discrete steps. The sequence is that of Porphobilinogen deaminase from Proteus mirabilis (strain HI4320).